Here is a 509-residue protein sequence, read N- to C-terminus: Histone deacetylase 2 (509 aa).

Residues 24-338 are histone deacetylase; sequence RRVCYFYDPE…WCYETGVALG (315 aa). The active-site Proton donor/acceptor is the His158. Residues Asp193, His195, and Asp281 each contribute to the Zn(2+) site. Residues 394–509 are disordered; that stretch reads PSVQFEERIP…NAKNEPGSSL (116 aa). 3 stretches are compositionally biased toward basic and acidic residues: residues 398 to 409, 418 to 434, and 448 to 472; these read FEERIPETKLPE, DERH…DHKP, and VKRE…HKVP. Positions 481 to 494 are enriched in polar residues; it reads SSKQVPTADANSMA.

The protein belongs to the histone deacetylase family. HD Type 1 subfamily. Zn(2+) serves as cofactor. In terms of tissue distribution, expressed in roots.

Its subcellular location is the nucleus. It carries out the reaction N(6)-acetyl-L-lysyl-[histone] + H2O = L-lysyl-[histone] + acetate. In terms of biological role, responsible for the deacetylation of lysine residues on the N-terminal part of the core histones (H2A, H2B, H3 and H4). Histone deacetylation gives a tag for epigenetic repression and plays an important role in transcriptional regulation, cell cycle progression and developmental events. Histone deacetylases act via the formation of large multiprotein complexes. This is Histone deacetylase 2 from Oryza sativa subsp. japonica (Rice).